The sequence spans 357 residues: DNA polymerase IV (357 aa).

In terms of domain architecture, UmuC spans 4–185 (IIHVDMDCYF…LSLRQIPGVG (182 aa)). Mg(2+) is bound by residues Asp-8 and Asp-103. The active site involves Glu-104.

Belongs to the DNA polymerase type-Y family. As to quaternary structure, monomer. Mg(2+) serves as cofactor.

The protein localises to the cytoplasm. It carries out the reaction DNA(n) + a 2'-deoxyribonucleoside 5'-triphosphate = DNA(n+1) + diphosphate. In terms of biological role, poorly processive, error-prone DNA polymerase involved in untargeted mutagenesis. Copies undamaged DNA at stalled replication forks, which arise in vivo from mismatched or misaligned primer ends. These misaligned primers can be extended by PolIV. Exhibits no 3'-5' exonuclease (proofreading) activity. May be involved in translesional synthesis, in conjunction with the beta clamp from PolIII. This is DNA polymerase IV from Shewanella oneidensis (strain ATCC 700550 / JCM 31522 / CIP 106686 / LMG 19005 / NCIMB 14063 / MR-1).